The primary structure comprises 695 residues: Elongation factor G (695 aa).

The 280-residue stretch at 10–289 (KNLRNIGIMA…AVVAWMPSPL (280 aa)) folds into the tr-type G domain. Residues 19–26 (AHIDAGKT), 83–87 (DTPGH), and 137–140 (NKMD) contribute to the GTP site.

The protein belongs to the TRAFAC class translation factor GTPase superfamily. Classic translation factor GTPase family. EF-G/EF-2 subfamily.

Its subcellular location is the cytoplasm. Its function is as follows. Catalyzes the GTP-dependent ribosomal translocation step during translation elongation. During this step, the ribosome changes from the pre-translocational (PRE) to the post-translocational (POST) state as the newly formed A-site-bound peptidyl-tRNA and P-site-bound deacylated tRNA move to the P and E sites, respectively. Catalyzes the coordinated movement of the two tRNA molecules, the mRNA and conformational changes in the ribosome. This Protochlamydia amoebophila (strain UWE25) protein is Elongation factor G.